A 1007-amino-acid chain; its full sequence is Zinc finger CCCH domain-containing protein 4 (1007 aa).

Positions 28-192 (VEKVKGNRVT…FRDLGRGERV (165 aa)) constitute a Helicase ATP-binding domain. 41-48 (GDTGCGKS) is an ATP binding site. The DEAH box motif lies at 139–142 (DEIH). In terms of domain architecture, Helicase C-terminal spans 250–420 (LIHRLLLHIH…EQVLMICCAE (171 aa)). C3H1-type zinc fingers lie at residues 723-750 (ALENEMCVFFLNGSCNRGDTCHFSHSSR) and 751-778 (APRPICKFFLTLQGCRNGNSCSFSHDSG).

This Oryza sativa subsp. japonica (Rice) protein is Zinc finger CCCH domain-containing protein 4.